The primary structure comprises 513 residues: Histidine ammonia-lyase (513 aa).

The 5-imidazolinone (Ala-Gly) cross-link spans 145-147 (ASG). Ser146 bears the 2,3-didehydroalanine (Ser) mark.

Belongs to the PAL/histidase family. In terms of processing, contains an active site 4-methylidene-imidazol-5-one (MIO), which is formed autocatalytically by cyclization and dehydration of residues Ala-Ser-Gly.

The protein localises to the cytoplasm. It carries out the reaction L-histidine = trans-urocanate + NH4(+). It participates in amino-acid degradation; L-histidine degradation into L-glutamate; N-formimidoyl-L-glutamate from L-histidine: step 1/3. The chain is Histidine ammonia-lyase from Vibrio vulnificus (strain CMCP6).